Reading from the N-terminus, the 125-residue chain is MGTRAQARFVRVTPRKARRVVDLIRGLPAEEAQAVLRFAPQAASGPVGKVLASAIANAEHNDKLDRETLVVSRAWVDEGPTLKRIRPRGFGRAFRVNKRTSHITVEVAPRDTVGAASAKRKERTR.

Belongs to the universal ribosomal protein uL22 family. In terms of assembly, part of the 50S ribosomal subunit.

Its function is as follows. This protein binds specifically to 23S rRNA; its binding is stimulated by other ribosomal proteins, e.g. L4, L17, and L20. It is important during the early stages of 50S assembly. It makes multiple contacts with different domains of the 23S rRNA in the assembled 50S subunit and ribosome. In terms of biological role, the globular domain of the protein is located near the polypeptide exit tunnel on the outside of the subunit, while an extended beta-hairpin is found that lines the wall of the exit tunnel in the center of the 70S ribosome. This Thermobifida fusca (strain YX) protein is Large ribosomal subunit protein uL22.